Consider the following 413-residue polypeptide: Arginine biosynthesis bifunctional protein ArgJ (413 aa).

6 residues coordinate substrate: Thr-154, Lys-180, Thr-191, Glu-277, Asn-408, and Thr-413. Catalysis depends on Thr-191, which acts as the Nucleophile.

The protein belongs to the ArgJ family. Heterotetramer of two alpha and two beta chains.

It localises to the cytoplasm. It carries out the reaction N(2)-acetyl-L-ornithine + L-glutamate = N-acetyl-L-glutamate + L-ornithine. It catalyses the reaction L-glutamate + acetyl-CoA = N-acetyl-L-glutamate + CoA + H(+). Its pathway is amino-acid biosynthesis; L-arginine biosynthesis; L-ornithine and N-acetyl-L-glutamate from L-glutamate and N(2)-acetyl-L-ornithine (cyclic): step 1/1. It participates in amino-acid biosynthesis; L-arginine biosynthesis; N(2)-acetyl-L-ornithine from L-glutamate: step 1/4. In terms of biological role, catalyzes two activities which are involved in the cyclic version of arginine biosynthesis: the synthesis of N-acetylglutamate from glutamate and acetyl-CoA as the acetyl donor, and of ornithine by transacetylation between N(2)-acetylornithine and glutamate. The chain is Arginine biosynthesis bifunctional protein ArgJ from Synechocystis sp. (strain ATCC 27184 / PCC 6803 / Kazusa).